The primary structure comprises 221 residues: Thiamine-phosphate synthase (221 aa).

4-amino-2-methyl-5-(diphosphooxymethyl)pyrimidine contacts are provided by residues 46-50 and Asn83; that span reads QFREK. Residues Asp84 and Asp103 each contribute to the Mg(2+) site. Residue Ser122 participates in 4-amino-2-methyl-5-(diphosphooxymethyl)pyrimidine binding. Residue 149 to 151 participates in 2-[(2R,5Z)-2-carboxy-4-methylthiazol-5(2H)-ylidene]ethyl phosphate binding; sequence TQS. Lys152 is a 4-amino-2-methyl-5-(diphosphooxymethyl)pyrimidine binding site. 2-[(2R,5Z)-2-carboxy-4-methylthiazol-5(2H)-ylidene]ethyl phosphate is bound by residues Gly181 and 201-202; that span reads IS.

Belongs to the thiamine-phosphate synthase family. The cofactor is Mg(2+).

The catalysed reaction is 2-[(2R,5Z)-2-carboxy-4-methylthiazol-5(2H)-ylidene]ethyl phosphate + 4-amino-2-methyl-5-(diphosphooxymethyl)pyrimidine + 2 H(+) = thiamine phosphate + CO2 + diphosphate. The enzyme catalyses 2-(2-carboxy-4-methylthiazol-5-yl)ethyl phosphate + 4-amino-2-methyl-5-(diphosphooxymethyl)pyrimidine + 2 H(+) = thiamine phosphate + CO2 + diphosphate. It carries out the reaction 4-methyl-5-(2-phosphooxyethyl)-thiazole + 4-amino-2-methyl-5-(diphosphooxymethyl)pyrimidine + H(+) = thiamine phosphate + diphosphate. It participates in cofactor biosynthesis; thiamine diphosphate biosynthesis; thiamine phosphate from 4-amino-2-methyl-5-diphosphomethylpyrimidine and 4-methyl-5-(2-phosphoethyl)-thiazole: step 1/1. Its function is as follows. Condenses 4-methyl-5-(beta-hydroxyethyl)thiazole monophosphate (THZ-P) and 2-methyl-4-amino-5-hydroxymethyl pyrimidine pyrophosphate (HMP-PP) to form thiamine monophosphate (TMP). This Actinobacillus succinogenes (strain ATCC 55618 / DSM 22257 / CCUG 43843 / 130Z) protein is Thiamine-phosphate synthase.